The chain runs to 83 residues: Prolactin-releasing peptide (83 aa).

Residues 1–21 (MALKTWLLCLLLLSLVLPGAS) form the signal peptide. Phe-52 carries the post-translational modification Phenylalanine amide. Residues 57–83 (ATPRDVTGLGQLSCLPLDGRTKFSQRG) constitute a propeptide that is removed on maturation.

Widely expressed, with highest levels in medulla oblongata and hypothalamus.

The protein localises to the secreted. Stimulates prolactin (PRL) release and regulates the expression of prolactin through its receptor GPR10. May stimulate lactotrophs directly to secrete PRL. This Rattus norvegicus (Rat) protein is Prolactin-releasing peptide (Prlh).